The following is a 262-amino-acid chain: Plant intracellular Ras-group-related LRR protein 7 (262 aa).

LRR repeat units lie at residues 19 to 42 (WRST…VLQV), 43 to 66 (GNSL…VGTL), 68 to 89 (NMQR…IGYL), 90 to 112 (RNLK…LGSL), 113 to 135 (SNLQ…VGDL), 137 to 158 (NMLL…IGGC), 159 to 181 (SSLE…ICNL), 182 to 204 (VCLK…LLKD), and 206 to 231 (KALQ…GFTE).

The protein belongs to the SHOC2 family. Widely expressed and preferentially in leaf sheathes.

Functionally, leucine-rich repeat protein that likely mediates protein interactions, possibly in the context of signal transduction. This Oryza sativa subsp. japonica (Rice) protein is Plant intracellular Ras-group-related LRR protein 7 (IRL7).